Reading from the N-terminus, the 280-residue chain is Large ribosomal subunit protein uL2 (280 aa).

Residues 223–280 form a disordered region; that stretch reads VVMNPVDHPHGGGEGRTSGGRHPVTPWGKPTKGARTRNKNKASSKLIIRSRHAKKKGR. The segment covering 254–280 has biased composition (basic residues); sequence KGARTRNKNKASSKLIIRSRHAKKKGR.

Belongs to the universal ribosomal protein uL2 family. Part of the 50S ribosomal subunit. Forms a bridge to the 30S subunit in the 70S ribosome.

One of the primary rRNA binding proteins. Required for association of the 30S and 50S subunits to form the 70S ribosome, for tRNA binding and peptide bond formation. It has been suggested to have peptidyltransferase activity; this is somewhat controversial. Makes several contacts with the 16S rRNA in the 70S ribosome. The sequence is that of Large ribosomal subunit protein uL2 from Dinoroseobacter shibae (strain DSM 16493 / NCIMB 14021 / DFL 12).